A 1196-amino-acid polypeptide reads, in one-letter code: ATP-dependent helicase/deoxyribonuclease subunit B (1196 aa).

Cys-823, Cys-1149, Cys-1152, and Cys-1158 together coordinate [4Fe-4S] cluster.

This sequence belongs to the helicase family. AddB/RexB type 2 subfamily. Heterodimer of AddA and RexB. The cofactor is Mg(2+). [4Fe-4S] cluster is required as a cofactor.

Its function is as follows. The heterodimer acts as both an ATP-dependent DNA helicase and an ATP-dependent, dual-direction single-stranded exonuclease. Recognizes the chi site generating a DNA molecule suitable for the initiation of homologous recombination. This subunit has 5' -&gt; 3' nuclease activity but not helicase activity. This Enterococcus faecalis (strain ATCC 700802 / V583) protein is ATP-dependent helicase/deoxyribonuclease subunit B.